The following is a 142-amino-acid chain: Large ribosomal subunit protein uL13 (142 aa).

This sequence belongs to the universal ribosomal protein uL13 family. Part of the 50S ribosomal subunit.

This protein is one of the early assembly proteins of the 50S ribosomal subunit, although it is not seen to bind rRNA by itself. It is important during the early stages of 50S assembly. This is Large ribosomal subunit protein uL13 from Pseudomonas syringae pv. tomato (strain ATCC BAA-871 / DC3000).